A 332-amino-acid chain; its full sequence is Ferredoxin--NADP reductase 2 (332 aa).

Residues D33, Q41, Y46, V86, I121, D282, and S325 each contribute to the FAD site.

It belongs to the ferredoxin--NADP reductase type 2 family. As to quaternary structure, homodimer. It depends on FAD as a cofactor.

It carries out the reaction 2 reduced [2Fe-2S]-[ferredoxin] + NADP(+) + H(+) = 2 oxidized [2Fe-2S]-[ferredoxin] + NADPH. The chain is Ferredoxin--NADP reductase 2 from Sulfolobus acidocaldarius (strain ATCC 33909 / DSM 639 / JCM 8929 / NBRC 15157 / NCIMB 11770).